The chain runs to 314 residues: Altered inheritance of mitochondria protein 6 homolog ARB_06966 (314 aa).

An N-terminal signal peptide occupies residues Met1–Ala21. N-linked (GlcNAc...) asparagine glycosylation is found at Asn91 and Asn184.

Belongs to the AIM6 family.

It is found in the secreted. This chain is Altered inheritance of mitochondria protein 6 homolog ARB_06966, found in Arthroderma benhamiae (strain ATCC MYA-4681 / CBS 112371) (Trichophyton mentagrophytes).